The chain runs to 367 residues: Eukaryotic translation initiation factor 3 subunit H (367 aa).

The region spanning 14-166 (VQVEALVVMK…LRAFRLSPNF (153 aa)) is the MPN domain.

Belongs to the eIF-3 subunit H family. In terms of assembly, component of the eukaryotic translation initiation factor 3 (eIF-3) complex.

The protein localises to the cytoplasm. Component of the eukaryotic translation initiation factor 3 (eIF-3) complex, which is involved in protein synthesis of a specialized repertoire of mRNAs and, together with other initiation factors, stimulates binding of mRNA and methionyl-tRNAi to the 40S ribosome. The eIF-3 complex specifically targets and initiates translation of a subset of mRNAs involved in cell proliferation. This chain is Eukaryotic translation initiation factor 3 subunit H, found in Sclerotinia sclerotiorum (strain ATCC 18683 / 1980 / Ss-1) (White mold).